The following is a 640-amino-acid chain: Threonine--tRNA ligase (640 aa).

One can recognise a TGS domain in the interval 1 to 61; it reads MPIIALPDGN…EKDSEVNIIT (61 aa). The interval 242–533 is catalytic; the sequence is DHRRIAKQMS…LIEHYAGRLP (292 aa). Zn(2+)-binding residues include Cys-333, His-384, and His-510.

Belongs to the class-II aminoacyl-tRNA synthetase family. Homodimer. It depends on Zn(2+) as a cofactor.

The protein resides in the cytoplasm. It catalyses the reaction tRNA(Thr) + L-threonine + ATP = L-threonyl-tRNA(Thr) + AMP + diphosphate + H(+). Its function is as follows. Catalyzes the attachment of threonine to tRNA(Thr) in a two-step reaction: L-threonine is first activated by ATP to form Thr-AMP and then transferred to the acceptor end of tRNA(Thr). Also edits incorrectly charged L-seryl-tRNA(Thr). This is Threonine--tRNA ligase from Prochlorococcus marinus (strain MIT 9313).